A 111-amino-acid polypeptide reads, in one-letter code: uncharacterized protein (111 aa).

A disordered region spans residues 1 to 26 (MDLKDGVEEEEGAGENGKGGTHAQRV).

This is an uncharacterized protein from Caenorhabditis elegans.